We begin with the raw amino-acid sequence, 212 residues long: uncharacterized protein (212 aa).

Positions 97–151 (SDASEAKNDDRRSDGRFALYSVSDTPETTTASRSADRSTNPKTAKHPKSAAKPTV) are disordered. Residues 100–111 (SEAKNDDRRSDG) are compositionally biased toward basic and acidic residues.

This is an uncharacterized protein from Mycobacterium tuberculosis (strain CDC 1551 / Oshkosh).